The sequence spans 507 residues: Transcription factor CP2 (507 aa).

The 240-residue stretch at 61 to 300 (ENKILPFQYV…SPGFNSSHNS (240 aa)) folds into the Grh/CP2 DB domain. The interval 133-395 (EHQQLEGWRW…LFNALKGRMV (263 aa)) is DNA-binding. Disordered regions lie at residues 240 to 268 (PKGA…YQPS) and 296 to 316 (SSHN…QPEP). Residues 241–265 (KGADRKQKTDREKMEKRTPQEKEKY) show a composition bias toward basic and acidic residues.

Belongs to the grh/CP2 family. CP2 subfamily. Component of the SSP (stage selector protein) complex, which appears to be a heteromer of TFCP2 and 2 copies of NFE4.

The protein resides in the nucleus. May function as a transcription factor. The protein is Transcription factor CP2 (tfcp2) of Xenopus tropicalis (Western clawed frog).